A 328-amino-acid polypeptide reads, in one-letter code: UPF0252 protein PF0978 (328 aa).

Residues 3-23 form a helical membrane-spanning segment; that stretch reads VPLLILLFLVLTSGCIAPSTP.

The protein belongs to the UPF0252 family.

It localises to the membrane. In Pyrococcus furiosus (strain ATCC 43587 / DSM 3638 / JCM 8422 / Vc1), this protein is UPF0252 protein PF0978.